The sequence spans 116 residues: MTNKIIQQLEAEQMSKEIPTFAPGDTIVVQVKVKEGERSRLQAFEGVVIAKRNRGLNSAFTVRKISSGVGVERTFQTYSPQIDSLAVKRRGDVRKAKLYYLRDLSGKAARIKEKLS.

This sequence belongs to the bacterial ribosomal protein bL19 family.

Functionally, this protein is located at the 30S-50S ribosomal subunit interface and may play a role in the structure and function of the aminoacyl-tRNA binding site. The protein is Large ribosomal subunit protein bL19 of Pseudomonas putida (strain W619).